The primary structure comprises 535 residues: Flavin-containing monooxygenase iboF (535 aa).

The first 24 residues, methionine 1–serine 24, serve as a signal peptide directing secretion. Glycine 60–glycine 65 lines the FAD pocket. Residues asparagine 134, asparagine 243, and asparagine 300 are each glycosylated (N-linked (GlcNAc...) asparagine). Position 307-312 (glycine 307–glycine 312) interacts with NADP(+). N-linked (GlcNAc...) asparagine glycans are attached at residues asparagine 356, asparagine 382, and asparagine 410.

It belongs to the FMO family. FAD serves as cofactor.

Its pathway is secondary metabolite biosynthesis. Flavin-containing monooxygenase; part of the gene cluster that mediates the biosynthesis of the psychoactive metabolites ibotenic acid and muscimol. The first committed step is glutamate hydroxylation by the 2-oxoglutarate-dependent dioxygenase iboH, and the last step is decarboxylation of ibotenic acid to muscimol by the decarboxylase iboD. The order of the intermediate reactions is somewhat ambiguous. IboA likely activates the carboxylic acid at position 5 to introduce an amide bond, and the flavin monooxygenase iboF generates the N-O bond. There are several options for the latter step. One option is that iboF directly hydroxylates the amide nitrogen formed by iboA to produce a hydroxamic acid species. Another option is that iboF hydroxylates an external N-containing compound, whose resulting N-O bond is subsequently introduced into the hydroxyglutamate scaffold. The paralogous PLP-dependent cystathionine gamma-synthase-like enzymes iboG1 and iboG2 are likely involved in substitution of the OH group at position 3 by the O-N moiety. The first cyclic intermediate is most probably tricholomic acid which is likely desaturated to ibotenic acid by the cytochrome P450 monooxygenase iboC. The chain is Flavin-containing monooxygenase iboF from Amanita muscaria (strain Koide BX008).